The chain runs to 1798 residues: MDSTLRRVVFFSNEFPSDDLKELFRRLDQHSKDRRFRLLSIFLEESTAVLKDEVSKFPRPLKELVPPFDSVLGLVDVDFRQGPLGAAMESSILTILELGLFIGHYESEDTEWDLVPGESVLAGLSIGILAAAAVALSSSLADVAKTGAEAVRVSFRLGVYVADISTKLEAPQSDGTLSSWAHVVTEMTEASVQDELKQFNTDTHSPELTKVFISAADKTSISVSGPPSRIKAAFQHSPVLRYSKSLPLPVYDGLCHASHLYTQSDIDFIINSAESVILPDRSVRLALLSSQTGKPFIAKTASELFLEIGTELLTGTIYLDNVTAGIVQHLQPQSKETSSWQIDSFRTSLVLRGIHSAVEANLSGEQRQLIRRDLVSWVNRDFGPRRPRSYASSKLAIVGMACRLPGGADDLDLFWKLLEEGRDTLTTVPPDRFDLNTHYDPTGKTENATQTPYGNFIDRPGFFDAGFFNMSPREAEQTDPMQRLALVTAYEALEMAGVVPGRTPSTHPSRIGTFYGQASDDWRELNASQNISTYAVPGGERAFGNGRINYFFKFSGPSFNLDTACSSGLAAVQVACSALWAGEVDTAIAGGLNVITDPDNYCGLGNAHFLSKTGQCKVWDKDADGYCRADGIGSVVIKRLEDAEADNDNILAVVLGASTNHSAEAISITHPHAGAQKANYRQVLNQAGVNPIDVSYIELHGTGTQAGDAVESESVSDIFAPVTPRRRPDQRLYLGAVKSNIGHGEAAAGIASLLKALLVYQKNLIPMHIGIKSEINPTIPKDLERRNVGLAMQNTPWPRPAGKKRLAVVNSFGAHGGNTTLLLEDAPERVKIQGTEDRITHAILLSAKSKKSLQANMESLLSYLDQHPETSLADLAYTTSSRRMHHNMRFGTSVSCISGLQKALRSQLDNPNFASEVRPVPNEAPSVILAFTGQGAYYHGMGRGLFTEFPYFRAQVQQLDRLAQRLGFPSVVPVIENSIEDTPSSPILTQLSVVILEIALARFWSLLGVSISAVIGHSLGEYAALAVSGVISTADAIYLVGRRAQLVEERCAQGSHSMLSVRASEDAIQEMLAAEPETALIAYEVSCCNTNQDTVIGGFQGEIDDIRRALEAKSIKCTILDVPYAFHTAQMNPILEDLETLAKAIPFKAPSIPVISPLLATVIYDVKSLNASYLRRATRETVDFAAAIEATQDMGLVDSKTMWIDVGPHPICAGLVRSMIPSAPVMSSCRRNEDSIATISKSLVTLYLAGLNPCWAEFFKPREREYSLLHLPKYRWNETDYWIPYIGTWTLDKAHLKHGTKPTTPFSVSMSRPSALRTSLVHQITAETVRTTTATLHTISDMQHPDFLEAIHGHTMNKCGVATSSIWSDMAFTVGEYLYRRLVPNTKDVHMNLTDVEVLHAQVASKTKGSVQPLVLRAHLDLSTSSMSLSWFNADGETGECAAESFATATILFEDPGAWRKEWARLAHLVLGRIEVLEQRATEGKASRLSKPLAYTLFKNVVDYADRYRGMDSVVLDELEAMAEVTLVPERYGTWHTPPHWIDSVSHLAGLVMNGSEASNTRDYFFVTPGCDSFRLLEKLEPGARYRSYVRMFPLPEDPNMHGGDVYILQGEEIVGVVGMIRFRRVPRLLMDRFFSPPTTTSVAGPVPPLAGATTKCHDIAQTAPALPTPTPPIVVSNPIVSSTLASKALEPAPLLATSSGDSTPKEPPIVTPAESERAGPVDNNMISQCLRLMARETGLEVEALTADASFVQLGVDSLMSLVLSEKFRAELGVEVKSSLFLECPTIGEMTAWIEEYC.

The tract at residues 25–256 is N-terminal acylcarrier protein transacylase domain (SAT); the sequence is RRLDQHSKDR…PLPVYDGLCH (232 aa). Positions 392–825 constitute a Ketosynthase family 3 (KS3) domain; the sequence is SSKLAIVGMA…GGNTTLLLED (434 aa). Active-site for beta-ketoacyl synthase activity residues include cysteine 565, histidine 700, and histidine 743. The interval 931 to 1224 is malonyl-CoA:ACP transacylase (MAT) domain; that stretch reads FTGQGAYYHG…LVRSMIPSAP (294 aa). Residues 1322-1458 form an N-terminal hotdog fold region; the sequence is HQITAETVRT…ATILFEDPGA (137 aa). The PKS/mFAS DH domain occupies 1322–1632; the sequence is HQITAETVRT…FRRVPRLLMD (311 aa). Histidine 1354 serves as the catalytic Proton acceptor; for dehydratase activity. Residues 1390-1628 are product template (PT) domain; the sequence is HMNLTDVEVL…GMIRFRRVPR (239 aa). A C-terminal hotdog fold region spans residues 1486-1632; that stretch reads ASRLSKPLAY…FRRVPRLLMD (147 aa). Residue aspartate 1543 is the Proton donor; for dehydratase activity of the active site. The disordered stretch occupies residues 1695 to 1721; that stretch reads LLATSSGDSTPKEPPIVTPAESERAGP. The 78-residue stretch at 1721 to 1798 folds into the Carrier domain; that stretch reads PVDNNMISQC…EMTAWIEEYC (78 aa). At serine 1758 the chain carries O-(pantetheine 4'-phosphoryl)serine.

Pantetheine 4'-phosphate is required as a cofactor.

It participates in secondary metabolite biosynthesis. Its function is as follows. Non-reducing polyketide synthase; part of the gene cluster that mediates the biosynthesis of neosartoricin B, a prenylated anthracenone that probably exhibits T-cell antiproliferative activity, suggestive of a physiological role as an immunosuppressive agent. The non-reducing polyketide synthase nscA probably synthesizes and cyclizes the decaketide backbone. The hydrolase nscB then mediates the product release through hydrolysis followed by spontaneous decarboxylation. The prenyltransferase nscD catalyzes the addition of the dimethylallyl group to the aromatic C5. The FAD-dependent monooxygenase nscC is then responsible for the stereospecific hydroxylation at C2. Neosartoricin B can be converted into two additional compounds neosartoricins C and D. Neosartoricin C is a spirocyclic compound that is cyclized through the attack of C3 hydroxyl on C14, followed by dehydration. On the other hand, neosartoricin D is a further cyclized compound in which attack of C2 on C14 in neosartoricin C results in the formation of the acetal-containing dioxabicyclo-octanone ring. Both of these compounds are novel and possibly represent related metabolites of the gene cluster. This Trichophyton rubrum (strain ATCC MYA-4607 / CBS 118892) (Athlete's foot fungus) protein is Non-reducing polyketide synthase nscA.